Here is a 219-residue protein sequence, read N- to C-terminus: Ropporin-1-like protein (219 aa).

The RIIa domain maps to 17–54 (PELPDILKQFTKAAIRTQPHDLLQWSAAYFDSLSKGEP).

It belongs to the ropporin family. As to quaternary structure, component of axonemal radial spoke complexes.

The protein resides in the cell projection. It is found in the cilium. It localises to the flagellum. Its function is as follows. Functions as part of axonemal radial spoke complexes that play an important part in the motility of sperm and cilia. Important for male fertility. Involved in fibrous sheath integrity and sperm motility, plays a role in PKA-dependent signaling processes required for spermatozoa capacitation. In Xenopus laevis (African clawed frog), this protein is Ropporin-1-like protein (ropn1l).